Reading from the N-terminus, the 614-residue chain is Serine/threonine-protein kinase-like protein E (614 aa).

The region spanning 15–404 is the Protein kinase domain; that stretch reads YLIQLHLGQN…NPNTNGAPLS (390 aa). 21-29 serves as a coordination point for ATP; the sequence is LGQNSLGQQ. The segment covering 256–269 has biased composition (polar residues); sequence PEQTDNGVGKSSTG. The tract at residues 256–284 is disordered; the sequence is PEQTDNGVGKSSTGEPPFPTVHQSPESSS.

It belongs to the protein kinase superfamily. Ser/Thr protein kinase family.

Lacks protein kinase activity. The polypeptide is Serine/threonine-protein kinase-like protein E (spkE) (Synechocystis sp. (strain ATCC 27184 / PCC 6803 / Kazusa)).